The primary structure comprises 261 residues: Cytochrome c oxidase subunit 3 (261 aa).

Residues 1–15 (MTHQTHAYHMVNPSP) are Mitochondrial matrix-facing. Residues 16-34 (WPLTGALSALLMTSGLAMW) traverse the membrane as a helical segment. The Mitochondrial intermembrane portion of the chain corresponds to 35–40 (FHYNLT). The helical transmembrane segment at 41-66 (LLLTLGMTTNLLTMYQWWRDIIREST) threads the bilayer. At 67–72 (FQGHHT) the chain is on the mitochondrial matrix side. The helical transmembrane segment at 73–105 (PIVQKGLRYGMILFIISEVFFFAGFFWAFYHSS) threads the bilayer. Residues 106–128 (LAPTPELGGCWPPTGIIPLNPLE) are Mitochondrial intermembrane-facing. A helical membrane pass occupies residues 129 to 152 (VPLLNTSVLLASGVSITWAHHSLM). The Mitochondrial matrix portion of the chain corresponds to 153-155 (EGN). A helical transmembrane segment spans residues 156-183 (RKHMLQALFITISLGVYFTLLQASEYYE). Over 184 to 190 (TSFTISD) the chain is Mitochondrial intermembrane. The helical transmembrane segment at 191 to 223 (GVYGSTFFMATGFHGLHVIIGSTFLIVCFLRQL) threads the bilayer. Over 224–232 (KYHFTSNHH) the chain is Mitochondrial matrix. The chain crosses the membrane as a helical span at residues 233-256 (FGFEAAAWYWHFVDVVWLFLYVSI). Residues 257-261 (YWWGS) lie on the Mitochondrial intermembrane side of the membrane.

The protein belongs to the cytochrome c oxidase subunit 3 family. Component of the cytochrome c oxidase (complex IV, CIV), a multisubunit enzyme composed of 14 subunits. The complex is composed of a catalytic core of 3 subunits MT-CO1, MT-CO2 and MT-CO3, encoded in the mitochondrial DNA, and 11 supernumerary subunits COX4I, COX5A, COX5B, COX6A, COX6B, COX6C, COX7A, COX7B, COX7C, COX8 and NDUFA4, which are encoded in the nuclear genome. The complex exists as a monomer or a dimer and forms supercomplexes (SCs) in the inner mitochondrial membrane with NADH-ubiquinone oxidoreductase (complex I, CI) and ubiquinol-cytochrome c oxidoreductase (cytochrome b-c1 complex, complex III, CIII), resulting in different assemblies (supercomplex SCI(1)III(2)IV(1) and megacomplex MCI(2)III(2)IV(2)).

The protein localises to the mitochondrion inner membrane. The enzyme catalyses 4 Fe(II)-[cytochrome c] + O2 + 8 H(+)(in) = 4 Fe(III)-[cytochrome c] + 2 H2O + 4 H(+)(out). Component of the cytochrome c oxidase, the last enzyme in the mitochondrial electron transport chain which drives oxidative phosphorylation. The respiratory chain contains 3 multisubunit complexes succinate dehydrogenase (complex II, CII), ubiquinol-cytochrome c oxidoreductase (cytochrome b-c1 complex, complex III, CIII) and cytochrome c oxidase (complex IV, CIV), that cooperate to transfer electrons derived from NADH and succinate to molecular oxygen, creating an electrochemical gradient over the inner membrane that drives transmembrane transport and the ATP synthase. Cytochrome c oxidase is the component of the respiratory chain that catalyzes the reduction of oxygen to water. Electrons originating from reduced cytochrome c in the intermembrane space (IMS) are transferred via the dinuclear copper A center (CU(A)) of subunit 2 and heme A of subunit 1 to the active site in subunit 1, a binuclear center (BNC) formed by heme A3 and copper B (CU(B)). The BNC reduces molecular oxygen to 2 water molecules using 4 electrons from cytochrome c in the IMS and 4 protons from the mitochondrial matrix. The sequence is that of Cytochrome c oxidase subunit 3 (MT-CO3) from Felis catus (Cat).